Consider the following 70-residue polypeptide: MIVPLLYLALAGAYLLVVPVALMFYLKQRWYVVSSVERTFMYFLVFLFFPGLLVLSPFVNLRPRPRKIEV.

A run of 2 helical transmembrane segments spans residues 2-22 (IVPLLYLALAGAYLLVVPVAL) and 39-59 (TFMYFLVFLFFPGLLVLSPFV).

It belongs to the complex I NdhL subunit family. NDH-1 can be composed of about 15 different subunits; different subcomplexes with different compositions have been identified which probably have different functions.

The protein resides in the cellular thylakoid membrane. It catalyses the reaction a plastoquinone + NADH + (n+1) H(+)(in) = a plastoquinol + NAD(+) + n H(+)(out). The enzyme catalyses a plastoquinone + NADPH + (n+1) H(+)(in) = a plastoquinol + NADP(+) + n H(+)(out). Functionally, NDH-1 shuttles electrons from an unknown electron donor, via FMN and iron-sulfur (Fe-S) centers, to quinones in the respiratory and/or the photosynthetic chain. The immediate electron acceptor for the enzyme in this species is believed to be plastoquinone. Couples the redox reaction to proton translocation, and thus conserves the redox energy in a proton gradient. Cyanobacterial NDH-1 also plays a role in inorganic carbon-concentration. The protein is NAD(P)H-quinone oxidoreductase subunit L of Trichormus variabilis (strain ATCC 29413 / PCC 7937) (Anabaena variabilis).